The following is a 254-amino-acid chain: Phosphoribosylaminoimidazole-succinocarboxamide synthase (254 aa).

This sequence belongs to the SAICAR synthetase family.

The catalysed reaction is 5-amino-1-(5-phospho-D-ribosyl)imidazole-4-carboxylate + L-aspartate + ATP = (2S)-2-[5-amino-1-(5-phospho-beta-D-ribosyl)imidazole-4-carboxamido]succinate + ADP + phosphate + 2 H(+). It functions in the pathway purine metabolism; IMP biosynthesis via de novo pathway; 5-amino-1-(5-phospho-D-ribosyl)imidazole-4-carboxamide from 5-amino-1-(5-phospho-D-ribosyl)imidazole-4-carboxylate: step 1/2. This Brucella melitensis biotype 2 (strain ATCC 23457) protein is Phosphoribosylaminoimidazole-succinocarboxamide synthase.